The sequence spans 869 residues: MAPTPSSSRSNQTQYTLIRTPQTKQRLNFHSKTPNPDGSKDPSPPEHPVEVIGRIRDYPDRKEKSPSILQVNTDNQTVRVRADVGYRDFTLDGVSFSEQEGLEEFYKKFIEERIKGVKVGNKCTIMMYGPTGAGKSHTMFGCGKEPGIVYRSLRDILGDSDQDGVTFVQVTVLEVYNEEIYDLLSTNSSNNLGIGWPKGASTKVRLEVMGKKAKNASFISGTEAGKISKEIVKVEKRRIVKSTLCNERSSRSHCIIILDVPTVGGRLMLVDMAGSENIDQAGQTGFEAKMQTAKINQGNIALKRVVESIANGDSHVPFRDSKLTMLLQDSFEDDKSKILMILCASPDPKEMHKTLCTLEYGAKAKCIVRGSHTPNKDKYGGDESASAVILGSRIAAMDEFIIKLQSEKKQKEKERNEAQKQLKKKEEEVAALRSLLTQREACATNEEEIKEKVNERTQLLKSELDKKLEECRRMAEEFVEMERRRMEERIVQQQEELEMMRRRLEEIEVEFRRSNGGSVDETSGFAKRLRSLYSDDDPGMVKSMDLDMGDPEPVKQVWGAVSHQSSNTISSNFTNLLQPKPSENMLTQMYPDRVCLSTVFEEEEVEEEEEKVIVEDKSICLITTPMPSLNSEGLGKENCFNGADDKESASSRRLRIQNIFTLCGNQRELSQHSGQEEDQANIASPDKKDNQFFSITNKAEALAVEEAKENNISVDQRENGQLDIYVKWETAADNPRKLITTLRVTKDATLADLRKLIEIYLGSDNQAFTFLKLGEPCGAQVAKEKESTVQATSLPLCNGHAYLATLRPGKSSQHKSLQPASPLPLNPIENMMEVTPISKVTPNHQVDEFSSPNLVAHLSSTPFITLRRH.

Residues 1–36 (MAPTPSSSRSNQTQYTLIRTPQTKQRLNFHSKTPNP) are compositionally biased toward polar residues. Positions 1–50 (MAPTPSSSRSNQTQYTLIRTPQTKQRLNFHSKTPNPDGSKDPSPPEHPVE) are disordered. Over residues 38–50 (GSKDPSPPEHPVE) the composition is skewed to basic and acidic residues. The region spanning 48–367 (PVEVIGRIRD…LEYGAKAKCI (320 aa)) is the Kinesin motor domain. Residue 129-136 (GPTGAGKS) coordinates ATP. The stretch at 393–515 (RIAAMDEFII…EIEVEFRRSN (123 aa)) forms a coiled coil.

This sequence belongs to the TRAFAC class myosin-kinesin ATPase superfamily. Kinesin family. KIN-10 subfamily. As to quaternary structure, binds microtubules.

It is found in the cytoplasm. The protein resides in the cytoskeleton. Its subcellular location is the phragmoplast. Probable plus end-directed motor protein that may contribute to the transport of Golgi-derived vesicles in the phragmoplast. This Arabidopsis thaliana (Mouse-ear cress) protein is Kinesin-like protein KIN-10A.